The sequence spans 153 residues: Endoribonuclease YbeY (153 aa).

Positions 114, 118, and 124 each coordinate Zn(2+).

Belongs to the endoribonuclease YbeY family. Requires Zn(2+) as cofactor.

It is found in the cytoplasm. Its function is as follows. Single strand-specific metallo-endoribonuclease involved in late-stage 70S ribosome quality control and in maturation of the 3' terminus of the 16S rRNA. This is Endoribonuclease YbeY from Finegoldia magna (strain ATCC 29328 / DSM 20472 / WAL 2508) (Peptostreptococcus magnus).